A 239-amino-acid polypeptide reads, in one-letter code: Octanoyltransferase (239 aa).

Positions 48 to 236 (EGGDELVWLV…AFETVFGETT (189 aa)) constitute a BPL/LPL catalytic domain. Residues 87–94 (RGGEYTYH), 167–169 (ALG), and 180–182 (GLS) each bind substrate. Cys-198 (acyl-thioester intermediate) is an active-site residue.

This sequence belongs to the LipB family.

It is found in the cytoplasm. It catalyses the reaction octanoyl-[ACP] + L-lysyl-[protein] = N(6)-octanoyl-L-lysyl-[protein] + holo-[ACP] + H(+). It functions in the pathway protein modification; protein lipoylation via endogenous pathway; protein N(6)-(lipoyl)lysine from octanoyl-[acyl-carrier-protein]: step 1/2. In terms of biological role, catalyzes the transfer of endogenously produced octanoic acid from octanoyl-acyl-carrier-protein onto the lipoyl domains of lipoate-dependent enzymes. Lipoyl-ACP can also act as a substrate although octanoyl-ACP is likely to be the physiological substrate. The protein is Octanoyltransferase of Rhizobium etli (strain ATCC 51251 / DSM 11541 / JCM 21823 / NBRC 15573 / CFN 42).